The following is a 391-amino-acid chain: MDQCVTVERELEKVLHKFSGYGQLCERGLEELIDYTGGLKHEILQSHGQDAELSGTLSLVLTQCCKRIKDTVQKLASDHKDIHSSVSRVGKAIDKNFDSDISSVGIDGCWQADSQRLLNEVMVEHFFRQGMLDVAEELCQESGLSVDPSQKEPFVELNRILEALKVRVLRPALEWAVSNREMLIAQNSSLEFKLHRLYFISLLMGGTTNQREALQYAKNFQPFALNHQKDIQVLMGSLVYLRQGIENSPYVHLLDANQWADICDIFTRDACALLGLSVESPLSVSFSAGCVALPALINIKAVIEQRQCTGVWNQKDELPIEVDLGKKCWYHSIFACPILRQQTTDNNPPMKLVCGHIISRDALNKMFNGSKLKCPYCPMEQSPGDAKQIFF.

Met-1 bears the N-acetylmethionine mark. Positions 114–146 constitute a LisH domain; sequence SQRLLNEVMVEHFFRQGMLDVAEELCQESGLSV. Positions 153-210 constitute a CTLH domain; it reads PFVELNRILEALKVRVLRPALEWAVSNREMLIAQNSSLEFKLHRLYFISLLMGGTTNQ. An RING-Gid-type zinc finger spans residues 336–377; it reads CPILRQQTTDNNPPMKLVCGHIISRDALNKMFNGSKLKCPYC.

In terms of assembly, identified in the CTLH complex that contains GID4, RANBP9 and/or RANBP10, MKLN1, MAEA, RMND5A (or alternatively its paralog RMND5B), GID8, ARMC8, WDR26 and YPEL5. Within this complex, MAEA, RMND5A (or alternatively its paralog RMND5B), GID8, WDR26, and RANBP9 and/or RANBP10 form the catalytic core, while GID4, MKLN1, ARMC8 and YPEL5 have ancillary roles.

It localises to the nucleus. It is found in the nucleoplasm. Its subcellular location is the cytoplasm. It catalyses the reaction S-ubiquitinyl-[E2 ubiquitin-conjugating enzyme]-L-cysteine + [acceptor protein]-L-lysine = [E2 ubiquitin-conjugating enzyme]-L-cysteine + N(6)-ubiquitinyl-[acceptor protein]-L-lysine.. In terms of biological role, core component of the CTLH E3 ubiquitin-protein ligase complex that selectively accepts ubiquitin from UBE2H and mediates ubiquitination and subsequent proteasomal degradation of the transcription factor HBP1. MAEA and RMND5A are both required for catalytic activity of the CTLH E3 ubiquitin-protein ligase complex. Catalytic activity of the complex is required for normal cell proliferation. The CTLH E3 ubiquitin-protein ligase complex is not required for the degradation of enzymes involved in gluconeogenesis, such as FBP1. The chain is E3 ubiquitin-protein ligase RMND5A (Rmnd5a) from Mus musculus (Mouse).